The following is a 513-amino-acid chain: Aspartic proteinase A2 (513 aa).

Positions 1–24 (MGVYSRAVAFSVFVSFLLFFTAYS) are cleaved as a signal peptide. Residues 25-71 (KRNDGTFRVGLKKLKLDPNNRLATRFGSKQEEALRSSLRSYNNNLGG) constitute a propeptide, activation peptide. Residues 89–510 (YYGEIAIGTP…DFGNEQVGFA (422 aa)) enclose the Peptidase A1 domain. The active site involves Asp107. 2 disulfide bridges follow: Cys120-Cys126 and Cys285-Cys289. Asp294 is an active-site residue. In terms of domain architecture, Saposin B-type spans 319-424 (VVSQQCKTVV…NEICERMPSP (106 aa)). 4 disulfides stabilise this stretch: Cys324/Cys418, Cys349/Cys390, Cys355/Cys387, and Cys432/Cys469. The N-linked (GlcNAc...) asparagine glycan is linked to Asn404.

It belongs to the peptidase A1 family. In terms of tissue distribution, expressed in seed pods and dry seeds.

Its subcellular location is the vacuole. Its function is as follows. Involved in the breakdown of propeptides of storage proteins in protein-storage vacuoles. This chain is Aspartic proteinase A2 (APA2), found in Arabidopsis thaliana (Mouse-ear cress).